The chain runs to 502 residues: UPF0371 protein CLJ_B0384 (502 aa).

The protein belongs to the UPF0371 family.

The sequence is that of UPF0371 protein CLJ_B0384 from Clostridium botulinum (strain 657 / Type Ba4).